Consider the following 442-residue polypeptide: Gamma-glutamyl phosphate reductase (442 aa).

This sequence belongs to the gamma-glutamyl phosphate reductase family.

The protein localises to the cytoplasm. It catalyses the reaction L-glutamate 5-semialdehyde + phosphate + NADP(+) = L-glutamyl 5-phosphate + NADPH + H(+). Its pathway is amino-acid biosynthesis; L-proline biosynthesis; L-glutamate 5-semialdehyde from L-glutamate: step 2/2. Functionally, catalyzes the NADPH-dependent reduction of L-glutamate 5-phosphate into L-glutamate 5-semialdehyde and phosphate. The product spontaneously undergoes cyclization to form 1-pyrroline-5-carboxylate. This is Gamma-glutamyl phosphate reductase from Campylobacter curvus (strain 525.92).